We begin with the raw amino-acid sequence, 227 residues long: MIHHIPNVLTKQQVAEFRALMDTAQWVNGKVTAGTLSASVKHNQQLSEQDPLTHHLSDLVIQAIWNNPAFQTAALPHHIIPPLFNRYDEHESFGFHVDNSIRLIRGTSQQMRTDLSCTLFLSEPEEYDGGDLVIEDTYGYHEVKLPAGDLVLYPSTSLHEVSSITRGSRFASFFWVQSLVRDDTKRHLLFNLDETVRSLRIQHGDGYPEVVKLTNIYHNLIRMWSEV.

Positions histidine 78–serine 178 constitute a Fe2OG dioxygenase domain. Fe cation-binding residues include histidine 96, aspartate 98, and histidine 159. Arginine 169 provides a ligand contact to 2-oxoglutarate.

The cofactor is Fe(2+). It depends on L-ascorbate as a cofactor.

The chain is PKHD-type hydroxylase ACIAD0531 from Acinetobacter baylyi (strain ATCC 33305 / BD413 / ADP1).